Reading from the N-terminus, the 441-residue chain is Alpha-methylserine aldolase (441 aa).

An N6-(pyridoxal phosphate)lysine modification is found at lysine 256.

Belongs to the SHMT family. Alpha-methylserine aldolase subfamily. In terms of assembly, homodimer. Requires pyridoxal 5'-phosphate as cofactor.

The catalysed reaction is 2-methyl-L-serine = formaldehyde + L-alanine. Functionally, catalyzes the reversible interconversion of alpha-methyl-L-serine to L-alanine and formaldehyde. This Variovorax paradoxus protein is Alpha-methylserine aldolase.